Here is an 84-residue protein sequence, read N- to C-terminus: Sporulation-specific transcription factor SpoVIF (84 aa).

The protein resides in the cytoplasm. Its function is as follows. Transcription factor involved in spore coat assembly and spore resistance. Required for gene regulation during the latter stages of sporulation. Regulates the transcription of at least cgeA, cotG and cotS. May directly or indirectly control the function of the GerE protein. This chain is Sporulation-specific transcription factor SpoVIF, found in Bacillus subtilis (strain 168).